A 299-amino-acid chain; its full sequence is Deoxyhypusine hydroxylase (299 aa).

HEAT-like PBS-type repeat units follow at residues 54-80, 87-113, 174-200, 205-231, and 238-264; these read LKHE…VLQD, VRHE…YSED, DRYR…GLRA, FRHE…ALRS, and VRHE…FAQD. Residues histidine 56, histidine 89, and glutamate 90 each coordinate Fe cation. Residues histidine 207, histidine 240, and glutamate 241 each coordinate Fe cation.

It belongs to the deoxyhypusine hydroxylase family. Fe(2+) is required as a cofactor.

The enzyme catalyses [eIF5A protein]-deoxyhypusine + AH2 + O2 = [eIF5A protein]-hypusine + A + H2O. It participates in protein modification; eIF5A hypusination. In terms of biological role, catalyzes the hydroxylation of the N(6)-(4-aminobutyl)-L-lysine intermediate produced by deoxyhypusine synthase/DHPS on a critical lysine of the eukaryotic translation initiation factor 5A/eIF-5A. This is the second step of the post-translational modification of that lysine into an unusual amino acid residue named hypusine. Hypusination is unique to mature eIF-5A factor and is essential for its function. The protein is Deoxyhypusine hydroxylase of Gallus gallus (Chicken).